The following is a 180-amino-acid chain: Bifunctional protein PyrR (180 aa).

The PRPP-binding motif lies at 101-113 (VILVDDVLYTGRT).

Belongs to the purine/pyrimidine phosphoribosyltransferase family. PyrR subfamily. In terms of assembly, homodimer and homohexamer; in equilibrium.

The enzyme catalyses UMP + diphosphate = 5-phospho-alpha-D-ribose 1-diphosphate + uracil. In terms of biological role, regulates transcriptional attenuation of the pyrimidine nucleotide (pyr) operon by binding in a uridine-dependent manner to specific sites on pyr mRNA. This disrupts an antiterminator hairpin in the RNA and favors formation of a downstream transcription terminator, leading to a reduced expression of downstream genes. Also displays a weak uracil phosphoribosyltransferase activity which is not physiologically significant. The chain is Bifunctional protein PyrR from Bacillus thuringiensis subsp. konkukian (strain 97-27).